The primary structure comprises 507 residues: Serine/threonine-protein kinase BSK11 (507 aa).

Gly2 carries the N-myristoyl glycine lipid modification. The segment covering 16–26 (DKKITSDDLSG) has biased composition (basic and acidic residues). The tract at residues 16–44 (DKKITSDDLSGRRGKGAKRGNRHRHANIN) is disordered. A compositionally biased stretch (basic residues) spans 27–41 (RRGKGAKRGNRHRHA). In terms of domain architecture, Protein kinase spans 75–332 (NAVVSVCSDQ…GDIISVITTL (258 aa)). Residues 81-89 (CSDQEPNLV) and Lys106 contribute to the ATP site. Catalysis depends on Asp200, which acts as the Proton acceptor.

Belongs to the protein kinase superfamily. Ser/Thr protein kinase family. In terms of assembly, interacts with BRI1, ASK7/BIN2, BSK1, BSK6 and BSK8. Phosphorylated by BRI1, ASK7/BIN2 and ASK9/BIL2.

Its subcellular location is the cell membrane. The catalysed reaction is L-seryl-[protein] + ATP = O-phospho-L-seryl-[protein] + ADP + H(+). It carries out the reaction L-threonyl-[protein] + ATP = O-phospho-L-threonyl-[protein] + ADP + H(+). Functionally, probable serine/threonine kinase that acts as a positive regulator of brassinosteroid (BR) signaling downstream of the receptor kinase BRI1. In Arabidopsis thaliana (Mouse-ear cress), this protein is Serine/threonine-protein kinase BSK11.